A 131-amino-acid polypeptide reads, in one-letter code: MKKNGILNAPLSRVIAELGHTDYIVIADCGLPIPPGVERIDLALKPGLPAFLDTLELVLADMQVERAVFANEISQHNPVIEHAATSMLDGKPIGHVPHAEFKQLSRGARAVIRTGEASPYANVILYSGVIF.

Histidine 20 functions as the Proton donor in the catalytic mechanism. Substrate is bound by residues aspartate 28, histidine 98, and 120–122; that span reads YAN.

The protein belongs to the RbsD / FucU family. RbsD subfamily. As to quaternary structure, homodecamer.

The protein localises to the cytoplasm. The enzyme catalyses beta-D-ribopyranose = beta-D-ribofuranose. Its pathway is carbohydrate metabolism; D-ribose degradation; D-ribose 5-phosphate from beta-D-ribopyranose: step 1/2. In terms of biological role, catalyzes the interconversion of beta-pyran and beta-furan forms of D-ribose. The chain is D-ribose pyranase from Laribacter hongkongensis (strain HLHK9).